The chain runs to 452 residues: Putative purine permease CPE0397 (452 aa).

A run of 12 helical transmembrane segments spans residues 34-54 (IFAAFGGIIVVPLVIATSLGF), 58-78 (VTTALISASILGSGLATIIQA), 83-103 (KVGARVACIMGTDFTFVSPAI), 108-128 (VLGLPGIIGATILGSLFEVIL), 138-158 (FFPPLVTGTVVALIGLTLLPV), 172-192 (YASLENLAVAMFVLVITLLLN), 201-221 (SASILIGIVVGYIVCIPLGLV), 250-270 (MAFIPAYFVATIGTVGCLKAI), 326-346 (AVMAGILLVILGFLPKVAAII), 348-368 (GIPNPVLGGVGIMMFGTVAAA), 383-403 (LLIIAISMGLGLGVTFRPDVI), and 412-432 (MIFSSGISTGTIAALILNAVL).

This sequence belongs to the nucleobase:cation symporter-2 (NCS2) (TC 2.A.40) family.

The protein resides in the cell membrane. This is Putative purine permease CPE0397 (cpx) from Clostridium perfringens (strain 13 / Type A).